The primary structure comprises 158 residues: NAD(P)H-quinone oxidoreductase subunit J, chloroplastic (158 aa).

Belongs to the complex I 30 kDa subunit family. NDH is composed of at least 16 different subunits, 5 of which are encoded in the nucleus.

The protein resides in the plastid. Its subcellular location is the chloroplast thylakoid membrane. The catalysed reaction is a plastoquinone + NADH + (n+1) H(+)(in) = a plastoquinol + NAD(+) + n H(+)(out). The enzyme catalyses a plastoquinone + NADPH + (n+1) H(+)(in) = a plastoquinol + NADP(+) + n H(+)(out). Functionally, NDH shuttles electrons from NAD(P)H:plastoquinone, via FMN and iron-sulfur (Fe-S) centers, to quinones in the photosynthetic chain and possibly in a chloroplast respiratory chain. The immediate electron acceptor for the enzyme in this species is believed to be plastoquinone. Couples the redox reaction to proton translocation, and thus conserves the redox energy in a proton gradient. This Lotus japonicus (Lotus corniculatus var. japonicus) protein is NAD(P)H-quinone oxidoreductase subunit J, chloroplastic.